A 274-amino-acid chain; its full sequence is Shikimate dehydrogenase (NADP(+)) (274 aa).

Shikimate is bound by residues 14 to 16 and Thr61; that span reads SLS. Catalysis depends on Lys65, which acts as the Proton acceptor. Positions 85 and 106 each coordinate shikimate. NADP(+)-binding positions include 130 to 134, 153 to 158, and Ala217; these read GAGGA and NRTAER. A shikimate-binding site is contributed by Tyr219. Position 240 (Gly240) interacts with NADP(+).

The protein belongs to the shikimate dehydrogenase family. As to quaternary structure, homodimer.

It carries out the reaction shikimate + NADP(+) = 3-dehydroshikimate + NADPH + H(+). It functions in the pathway metabolic intermediate biosynthesis; chorismate biosynthesis; chorismate from D-erythrose 4-phosphate and phosphoenolpyruvate: step 4/7. Involved in the biosynthesis of the chorismate, which leads to the biosynthesis of aromatic amino acids. Catalyzes the reversible NADPH linked reduction of 3-dehydroshikimate (DHSA) to yield shikimate (SA). In Halorubrum lacusprofundi (strain ATCC 49239 / DSM 5036 / JCM 8891 / ACAM 34), this protein is Shikimate dehydrogenase (NADP(+)).